The sequence spans 186 residues: dCTP deaminase (186 aa).

A dCTP-binding site is contributed by K107–R112. The Proton donor/acceptor role is filled by E133. Residues Q152, Y166, and Q176 each contribute to the dCTP site.

The protein belongs to the dCTP deaminase family. As to quaternary structure, homotrimer.

It catalyses the reaction dCTP + H2O + H(+) = dUTP + NH4(+). The protein operates within pyrimidine metabolism; dUMP biosynthesis; dUMP from dCTP (dUTP route): step 1/2. Catalyzes the deamination of dCTP to dUTP. This is dCTP deaminase from Campylobacter curvus (strain 525.92).